We begin with the raw amino-acid sequence, 203 residues long: 5-formyltetrahydrofolate cyclo-ligase (203 aa).

Residue Ala2 is modified to N-acetylalanine. Residues 10–14 and Arg14 contribute to the ATP site; that span reads KRSLR. Substrate-binding positions include Leu56, Glu61, and 148-152; that span reads RGKGY. 145 to 153 contributes to the ATP binding site; that stretch reads RLGRGKGYY. Asp154 and Asp189 together coordinate Mg(2+).

This sequence belongs to the 5-formyltetrahydrofolate cyclo-ligase family. In terms of assembly, monomer. Requires Mg(2+) as cofactor.

It is found in the cytoplasm. It carries out the reaction (6S)-5-formyl-5,6,7,8-tetrahydrofolate + ATP = (6R)-5,10-methenyltetrahydrofolate + ADP + phosphate. In terms of biological role, contributes to tetrahydrofolate metabolism. Helps regulate carbon flow through the folate-dependent one-carbon metabolic network that supplies carbon for the biosynthesis of purines, thymidine and amino acids. Catalyzes the irreversible conversion of 5-formyltetrahydrofolate (5-FTHF) to yield 5,10-methenyltetrahydrofolate. The sequence is that of 5-formyltetrahydrofolate cyclo-ligase (MTHFS) from Homo sapiens (Human).